The chain runs to 467 residues: Acid phosphatase PHO11 (467 aa).

A signal peptide spans 1–17 (MLKSAVYSILAASLVNA). H75 (nucleophile) is an active-site residue. N-linked (GlcNAc...) asparagine glycans are attached at residues N97, N162, N192, N250, and N315. Residue D338 is the Proton donor of the active site. N-linked (GlcNAc...) asparagine glycans are attached at residues N356, N390, N439, N445, and N461.

It belongs to the histidine acid phosphatase family. Post-translationally, glycosylated during secretion across the membrane.

It carries out the reaction a phosphate monoester + H2O = an alcohol + phosphate. This Saccharomyces cerevisiae (strain ATCC 204508 / S288c) (Baker's yeast) protein is Acid phosphatase PHO11 (PHO11).